Here is a 357-residue protein sequence, read N- to C-terminus: Heat-inducible transcription repressor HrcA (357 aa).

This sequence belongs to the HrcA family.

Negative regulator of class I heat shock genes (grpE-dnaK-dnaJ and groELS operons). Prevents heat-shock induction of these operons. This is Heat-inducible transcription repressor HrcA from Chlorobium limicola (strain DSM 245 / NBRC 103803 / 6330).